Reading from the N-terminus, the 117-residue chain is NADH-ubiquinone oxidoreductase chain 3 (117 aa).

A run of 3 helical transmembrane segments spans residues 4–24 (ILIY…LGLI), 57–77 (FFLL…LLPL), and 88–108 (WPLT…FHEW).

The protein belongs to the complex I subunit 3 family.

It is found in the mitochondrion membrane. It carries out the reaction a ubiquinone + NADH + 5 H(+)(in) = a ubiquinol + NAD(+) + 4 H(+)(out). Functionally, core subunit of the mitochondrial membrane respiratory chain NADH dehydrogenase (Complex I) that is believed to belong to the minimal assembly required for catalysis. Complex I functions in the transfer of electrons from NADH to the respiratory chain. The immediate electron acceptor for the enzyme is believed to be ubiquinone. The sequence is that of NADH-ubiquinone oxidoreductase chain 3 (ND3) from Heterololigo bleekeri (Spear squid).